We begin with the raw amino-acid sequence, 180 residues long: ADP-ribosylation factor-like protein 1 (180 aa).

Residue glycine 2 is the site of N-myristoyl glycine attachment. Residues 23 to 30, 66 to 70, and 125 to 128 each bind GTP; these read GLDGAGKT, DLGGQ, and NKQD.

It belongs to the small GTPase superfamily. Arf family.

GTP-binding protein involved in protein trafficking; may modulate vesicle budding and uncoating within the Golgi apparatus. In Drosophila melanogaster (Fruit fly), this protein is ADP-ribosylation factor-like protein 1 (Arl1).